A 241-amino-acid polypeptide reads, in one-letter code: Small ribosomal subunit protein bS6 (241 aa).

Positions 97–108 (KPKIRERNRKYT) are enriched in basic residues. The segment at 97–241 (KPKIRERNRK…YNNKKPQSSN (145 aa)) is disordered. A compositionally biased stretch (basic and acidic residues) spans 109–118 (LRRDRFDKPN). Low complexity-rich tracts occupy residues 130–151 (QDQQ…QASQ) and 161–182 (DDFQ…NQSG). Basic and acidic residues predominate over residues 183 to 193 (YHRENNRHNQE). Low complexity predominate over residues 194 to 210 (NMHQNNKNHQNQTSQTQ).

Belongs to the bacterial ribosomal protein bS6 family.

Binds together with bS18 to 16S ribosomal RNA. This Mesomycoplasma hyopneumoniae (strain J / ATCC 25934 / NCTC 10110) (Mycoplasma hyopneumoniae) protein is Small ribosomal subunit protein bS6.